An 84-amino-acid chain; its full sequence is Beta-defensin 119 (84 aa).

The signal sequence occupies residues Met1–Gly21. 3 disulfides stabilise this stretch: Cys28-Cys55, Cys35-Cys49, and Cys39-Cys56.

The protein belongs to the beta-defensin family. In terms of tissue distribution, abundant expression in the male reproductive tract only. Expressed abundantly in testis, while expression in epididymis decreased gradually from caput to cauda.

The protein localises to the secreted. Its function is as follows. Has antibacterial activity. This is Beta-defensin 119 (DEFB119) from Macaca mulatta (Rhesus macaque).